Reading from the N-terminus, the 87-residue chain is Mitochondrial import inner membrane translocase subunit TIM9 (87 aa).

The Twin CX3C motif signature appears at 35–59; the sequence is CFTDCVNDFTSSKLTSKEESCILKC. 2 disulfides stabilise this stretch: cysteine 35/cysteine 59 and cysteine 39/cysteine 55.

This sequence belongs to the small Tim family. In terms of assembly, heterohexamer; composed of 3 copies of TIM9 and 3 copies of TIM10, named soluble 70 kDa complex. Associates with the TIM22 complex, whose core is composed of TIM22 and TIM54. Interacts with the transmembrane regions of multi-pass transmembrane proteins in transit.

It is found in the mitochondrion inner membrane. In terms of biological role, mitochondrial intermembrane chaperone that participates in the import and insertion of multi-pass transmembrane proteins into the mitochondrial inner membrane. Also required for the transfer of beta-barrel precursors from the TOM complex to the sorting and assembly machinery (SAM complex) of the outer membrane. Acts as a chaperone-like protein that protects the hydrophobic precursors from aggregation and guide them through the mitochondrial intermembrane space. This Candida glabrata (strain ATCC 2001 / BCRC 20586 / JCM 3761 / NBRC 0622 / NRRL Y-65 / CBS 138) (Yeast) protein is Mitochondrial import inner membrane translocase subunit TIM9 (TIM9).